The chain runs to 472 residues: Protein DML1 (472 aa).

A compositionally biased stretch (basic and acidic residues) spans 441-463 (GDEREEMKQELGDMASKYEHGWE). The tract at residues 441–472 (GDEREEMKQELGDMASKYEHGWEEESDDDDDY) is disordered.

This sequence belongs to the misato family.

The protein localises to the mitochondrion. Involved in the partitioning of the mitochondrial organelle and mitochondrial DNA (mtDNA) inheritance. This is Protein DML1 (DML1) from Yarrowia lipolytica (strain CLIB 122 / E 150) (Yeast).